The chain runs to 317 residues: 4-hydroxy-3-methylbut-2-enyl diphosphate reductase (317 aa).

Position 12 (C12) interacts with [4Fe-4S] cluster. Positions 41 and 74 each coordinate (2E)-4-hydroxy-3-methylbut-2-enyl diphosphate. Dimethylallyl diphosphate contacts are provided by H41 and H74. Isopentenyl diphosphate is bound by residues H41 and H74. A [4Fe-4S] cluster-binding site is contributed by C97. Residue H125 participates in (2E)-4-hydroxy-3-methylbut-2-enyl diphosphate binding. A dimethylallyl diphosphate-binding site is contributed by H125. H125 serves as a coordination point for isopentenyl diphosphate. The active-site Proton donor is the E127. Residue T168 coordinates (2E)-4-hydroxy-3-methylbut-2-enyl diphosphate. C198 is a [4Fe-4S] cluster binding site. Residues S226, S227, N228, and S270 each coordinate (2E)-4-hydroxy-3-methylbut-2-enyl diphosphate. Dimethylallyl diphosphate contacts are provided by S226, S227, N228, and S270. 4 residues coordinate isopentenyl diphosphate: S226, S227, N228, and S270.

The protein belongs to the IspH family. In terms of assembly, homodimer. It depends on [4Fe-4S] cluster as a cofactor.

It catalyses the reaction isopentenyl diphosphate + 2 oxidized [2Fe-2S]-[ferredoxin] + H2O = (2E)-4-hydroxy-3-methylbut-2-enyl diphosphate + 2 reduced [2Fe-2S]-[ferredoxin] + 2 H(+). The enzyme catalyses dimethylallyl diphosphate + 2 oxidized [2Fe-2S]-[ferredoxin] + H2O = (2E)-4-hydroxy-3-methylbut-2-enyl diphosphate + 2 reduced [2Fe-2S]-[ferredoxin] + 2 H(+). It functions in the pathway isoprenoid biosynthesis; dimethylallyl diphosphate biosynthesis; dimethylallyl diphosphate from (2E)-4-hydroxy-3-methylbutenyl diphosphate: step 1/1. Its pathway is isoprenoid biosynthesis; isopentenyl diphosphate biosynthesis via DXP pathway; isopentenyl diphosphate from 1-deoxy-D-xylulose 5-phosphate: step 6/6. Functionally, catalyzes the conversion of 1-hydroxy-2-methyl-2-(E)-butenyl 4-diphosphate (HMBPP) into a mixture of isopentenyl diphosphate (IPP) and dimethylallyl diphosphate (DMAPP). Acts in the terminal step of the DOXP/MEP pathway for isoprenoid precursor biosynthesis. In Proteus mirabilis (strain HI4320), this protein is 4-hydroxy-3-methylbut-2-enyl diphosphate reductase.